Here is a 65-residue protein sequence, read N- to C-terminus: Large ribosomal subunit protein bL35 (65 aa).

The interval 1–40 (MPKMKTNSGSKKRFALTGTGKIKRKHAFHSHILTKKSKKR) is disordered. The segment covering 21 to 40 (KIKRKHAFHSHILTKKSKKR) has biased composition (basic residues).

The protein belongs to the bacterial ribosomal protein bL35 family.

This Bacteroides fragilis (strain ATCC 25285 / DSM 2151 / CCUG 4856 / JCM 11019 / LMG 10263 / NCTC 9343 / Onslow / VPI 2553 / EN-2) protein is Large ribosomal subunit protein bL35.